Reading from the N-terminus, the 156-residue chain is Transmembrane protein 50 homolog (156 aa).

Transmembrane regions (helical) follow at residues 5–25 (IMKYLPALAGIIFTAGWFLWI), 45–65 (IQWIYYLPGIFATLGMVMANI), 87–107 (VWLFISFAISFGCIGAALWIM), and 124–144 (PGIAITLQTSLIFLSSLLLVF).

The protein belongs to the UPF0220 family.

The protein resides in the membrane. The sequence is that of Transmembrane protein 50 homolog (tmem50) from Dictyostelium discoideum (Social amoeba).